Here is a 347-residue protein sequence, read N- to C-terminus: DNA-directed RNA polymerase subunit alpha (347 aa).

Positions Met1–Asn226 are alpha N-terminal domain (alpha-NTD). The tract at residues His243 to Leu347 is alpha C-terminal domain (alpha-CTD).

The protein belongs to the RNA polymerase alpha chain family. As to quaternary structure, homodimer. The RNAP catalytic core consists of 2 alpha, 1 beta, 1 beta' and 1 omega subunit. When a sigma factor is associated with the core the holoenzyme is formed, which can initiate transcription.

It catalyses the reaction RNA(n) + a ribonucleoside 5'-triphosphate = RNA(n+1) + diphosphate. Its function is as follows. DNA-dependent RNA polymerase catalyzes the transcription of DNA into RNA using the four ribonucleoside triphosphates as substrates. This is DNA-directed RNA polymerase subunit alpha from Mycobacterium bovis (strain ATCC BAA-935 / AF2122/97).